The chain runs to 321 residues: Glutathione synthetase (321 aa).

The ATP-grasp domain maps to 125–311 (EKLFTGWFPH…IAGQFIAFLE (187 aa)). ATP is bound at residue 151 to 208 (FIREQKEVVIKPLGAMAGESIFYLTVNDPNIPVVIETMTANGHQLVMAQRFIPEVKSG). Mg(2+)-binding residues include E282 and N284.

The protein belongs to the prokaryotic GSH synthase family. Mg(2+) is required as a cofactor. The cofactor is Mn(2+).

It catalyses the reaction gamma-L-glutamyl-L-cysteine + glycine + ATP = glutathione + ADP + phosphate + H(+). Its pathway is sulfur metabolism; glutathione biosynthesis; glutathione from L-cysteine and L-glutamate: step 2/2. The sequence is that of Glutathione synthetase from Coxiella burnetii (strain RSA 493 / Nine Mile phase I).